A 715-amino-acid polypeptide reads, in one-letter code: Fatty acid oxidation complex subunit alpha (715 aa).

Residues 1–190 (MIYEGKAITV…KVGAVDAVVA (190 aa)) form an enoyl-CoA hydratase/isomerase region. Asp-297 contributes to the substrate binding site. A 3-hydroxyacyl-CoA dehydrogenase region spans residues 312-715 (HDVKQAAVLG…MAKNGQRFFN (404 aa)). Residues Met-325, Asp-344, 401–403 (VVE), Lys-408, and Ser-430 each bind NAD(+). His-451 acts as the For 3-hydroxyacyl-CoA dehydrogenase activity in catalysis. Position 454 (Asn-454) interacts with NAD(+). Substrate contacts are provided by Asn-501 and Tyr-660.

This sequence in the N-terminal section; belongs to the enoyl-CoA hydratase/isomerase family. It in the C-terminal section; belongs to the 3-hydroxyacyl-CoA dehydrogenase family. In terms of assembly, heterotetramer of two alpha chains (FadB) and two beta chains (FadA).

The catalysed reaction is a (3S)-3-hydroxyacyl-CoA + NAD(+) = a 3-oxoacyl-CoA + NADH + H(+). It carries out the reaction a (3S)-3-hydroxyacyl-CoA = a (2E)-enoyl-CoA + H2O. The enzyme catalyses a 4-saturated-(3S)-3-hydroxyacyl-CoA = a (3E)-enoyl-CoA + H2O. It catalyses the reaction (3S)-3-hydroxybutanoyl-CoA = (3R)-3-hydroxybutanoyl-CoA. The catalysed reaction is a (3Z)-enoyl-CoA = a 4-saturated (2E)-enoyl-CoA. It carries out the reaction a (3E)-enoyl-CoA = a 4-saturated (2E)-enoyl-CoA. It participates in lipid metabolism; fatty acid beta-oxidation. In terms of biological role, involved in the aerobic and anaerobic degradation of long-chain fatty acids via beta-oxidation cycle. Catalyzes the formation of 3-oxoacyl-CoA from enoyl-CoA via L-3-hydroxyacyl-CoA. It can also use D-3-hydroxyacyl-CoA and cis-3-enoyl-CoA as substrate. This Pseudomonas putida (strain GB-1) protein is Fatty acid oxidation complex subunit alpha.